The sequence spans 1129 residues: Phytochrome A type 3 (1129 aa).

The segment covering 1 to 21 (MSSSRPASSSSSRNRQSSQAR) has biased composition (low complexity). The interval 1–24 (MSSSRPASSSSSRNRQSSQARVLA) is disordered. The GAF domain maps to 217 to 402 (SMEVLCNTVV…VFAVHVNREF (186 aa)). Cysteine 322 is a binding site for phytochromobilin. 2 PAS domains span residues 618 to 688 (VTSE…LQGK) and 748 to 822 (VEGD…VSLC). One can recognise a Histidine kinase domain in the interval 902 to 1122 (YMRHAINNPL…TFIITAELAS (221 aa)).

It belongs to the phytochrome family. As to quaternary structure, homodimer. Post-translationally, contains one covalently linked phytochromobilin chromophore.

Regulatory photoreceptor which exists in two forms that are reversibly interconvertible by light: the Pr form that absorbs maximally in the red region of the spectrum and the Pfr form that absorbs maximally in the far-red region. Photoconversion of Pr to Pfr induces an array of morphogenic responses, whereas reconversion of Pfr to Pr cancels the induction of those responses. Pfr controls the expression of a number of nuclear genes including those encoding the small subunit of ribulose-bisphosphate carboxylase, chlorophyll A/B binding protein, protochlorophyllide reductase, rRNA, etc. It also controls the expression of its own gene(s) in a negative feedback fashion. The protein is Phytochrome A type 3 (PHYA3) of Avena sativa (Oat).